A 645-amino-acid polypeptide reads, in one-letter code: Threonine--tRNA ligase (645 aa).

A TGS domain is found at 1–61; the sequence is MPAITLPDGS…SSDASVKFIT (61 aa). The segment at 243 to 536 is catalytic; that stretch reads DHRRIGREMD…LIEQYAGKFP (294 aa). Zn(2+) is bound by residues C336, H387, and H513.

Belongs to the class-II aminoacyl-tRNA synthetase family. As to quaternary structure, homodimer. Requires Zn(2+) as cofactor.

The protein localises to the cytoplasm. The enzyme catalyses tRNA(Thr) + L-threonine + ATP = L-threonyl-tRNA(Thr) + AMP + diphosphate + H(+). Functionally, catalyzes the attachment of threonine to tRNA(Thr) in a two-step reaction: L-threonine is first activated by ATP to form Thr-AMP and then transferred to the acceptor end of tRNA(Thr). Also edits incorrectly charged L-seryl-tRNA(Thr). The sequence is that of Threonine--tRNA ligase from Gluconobacter oxydans (strain 621H) (Gluconobacter suboxydans).